The chain runs to 471 residues: Ubiquitin carboxyl-terminal hydrolase calypso (471 aa).

The region spanning 45–276 (GWLELESDPG…IRFNLMAVVP (232 aa)) is the UCH catalytic domain. C131 (nucleophile) is an active-site residue. Catalysis depends on H213, which acts as the Proton donor. 2 coiled-coil regions span residues 240-256 (WEDSEDWTDKFRRVMAE) and 298-324 (GTLQKLLKADEQGESGNGDSQRPDTPT). Residues 307–326 (DEQGESGNGDSQRPDTPTTL) are disordered. The segment covering 314–326 (NGDSQRPDTPTTL) has biased composition (polar residues). In terms of domain architecture, ULD spans 375–403 (NYDKFICTFLSMLAHQGVLGELVSQHLLP). The interval 405–471 (KKVSGQGAAN…KGRNKCRKRK (67 aa)) is positively charged C-terminal tail required for binding nucleosomes. The tract at residues 412–471 (AANRISKQSTTASAGGSTAAGTASTPKTQQQQAAAAKNGKSPSKTPGRRRKGRNKCRKRK) is disordered. Residues 420–447 (STTASAGGSTAAGTASTPKTQQQQAAAA) are compositionally biased toward low complexity. The segment covering 457 to 471 (PGRRRKGRNKCRKRK) has biased composition (basic residues).

This sequence belongs to the peptidase C12 family. BAP1 subfamily. Catalytic component of the polycomb repressive deubiquitinase (PR-DUB) complex, at least composed of caly/calypso, Asx and sba (MBD5/6 homolog). The PR-DUB complex associates with nucleosomes to mediate deubiquitination of histone H2AK118ub1 substrates; the association requires the positively charged C-terminal tail of caly, probably due to direct binding of DNA. Interacts (via ULD domain) with Asx (via DEUBAD domain); the interaction produces a stable heterodimer with a composite binding site for ubiquitin. Homodimerizes (via coiled-coil hinge-region between the UCH and ULD domains) to mediate assembly of 2 copies of the caly-Asx heterodimer into a bisymmetric tetramer; dimerization enhances PR-DUB association with nucleosomes.

The protein localises to the nucleus. It carries out the reaction Thiol-dependent hydrolysis of ester, thioester, amide, peptide and isopeptide bonds formed by the C-terminal Gly of ubiquitin (a 76-residue protein attached to proteins as an intracellular targeting signal).. Functionally, catalytic component of the polycomb repressive deubiquitinase (PR-DUB) complex, a complex that specifically mediates deubiquitination of histone H2A monoubiquitinated at 'Lys-119' (H2AK118ub1). Mediates bisymmetric organization of the PR-DUB complex and is involved in association with nucleosomes to mediate deubiquitination. Does not deubiquitinate monoubiquitinated histone H2B. Required to maintain the transcriptionally repressive state of homeotic genes throughout development. The PR-DUB complex has weak or no activity toward 'Lys-48'- and 'Lys-63'-linked polyubiquitin chains. Polycomb group (PcG) protein. This Drosophila melanogaster (Fruit fly) protein is Ubiquitin carboxyl-terminal hydrolase calypso.